The following is a 764-amino-acid chain: Ergosteryl-beta-glucosidase (764 aa).

The active-site Nucleophile is Glu-515. The disordered stretch occupies residues 588–629; the sequence is HDTRAKTPTPEPSPASTVASVSTSTSKSGSSQPPSFIKPDNH. Thr-594 carries the phosphothreonine modification. Positions 601-622 are enriched in low complexity; the sequence is PASTVASVSTSTSKSGSSQPPS.

This sequence belongs to the glycosyl hydrolase 5 (cellulase A) family.

Its subcellular location is the cytoplasm. It localises to the cytosol. It is found in the vacuole membrane. The enzyme catalyses ergosteryl 3-beta-D-glucoside + H2O = ergosterol + D-glucose. Functionally, ergosteryl beta-glucosidase involved in the ergosteryl beta-glucoside (EG) catabolic pathway and vacuole formation via hydrolysis of EG to generate glucose. Is also able to hydrolyze cholesteryl beta-glucoside and sitosteryl beta-glucoside to generate glucose; and C6-7-nitro-2,1,3-benzoxadiazole (NBD)-GlcCer to generate C6-NBD-ceramide (Cer). This Saccharomyces cerevisiae (strain ATCC 204508 / S288c) (Baker's yeast) protein is Ergosteryl-beta-glucosidase.